The primary structure comprises 576 residues: Low-affinity glucose transporter HXT4 (576 aa).

The disordered stretch occupies residues 1-56 (MSEEAAYQEDTAVQNTPADALSPVESDSNSALSTPSNKAERDDMKDFDENHEESNN). The Cytoplasmic portion of the chain corresponds to 1–66 (MSEEAAYQED…YVEIPKKPAS (66 aa)). The span at 25-37 (ESDSNSALSTPSN) shows a compositional bias: polar residues. A compositionally biased stretch (basic and acidic residues) spans 38–54 (KAERDDMKDFDENHEES). K45 participates in a covalent cross-link: Glycyl lysine isopeptide (Lys-Gly) (interchain with G-Cter in ubiquitin). A helical transmembrane segment spans residues 67–87 (AYVTVSICCLMVAFGGFVFGW). At 88 to 122 (DTGTISGFVAQTDFIRRFGMKHHDGTYYLSKVRTG) the chain is on the extracellular side. A helical membrane pass occupies residues 123 to 143 (LIVSIFNIGCAIGGIILAKLG). The Cytoplasmic segment spans residues 144–149 (DMYGRK). Residues 150-170 (MGLIVVVVIYIIGIIIQIASI) form a helical membrane-spanning segment. Topologically, residues 171–180 (NKWYQYFIGR) are extracellular. A helical transmembrane segment spans residues 181 to 201 (IISGLGVGGIAVLSPMLISEV). Topologically, residues 202-207 (SPKHIR) are cytoplasmic. Residues 208–228 (GTLVSCYQLMITLGIFLGYCT) form a helical membrane-spanning segment. Residues 229–242 (NYGTKTYTNSVQWR) are Extracellular-facing. Residues 243 to 263 (VPLGLGFAWALFMIGGMTFVP) traverse the membrane as a helical segment. The Cytoplasmic segment spans residues 264 to 346 (ESPRYLVEVG…IQSLQQLTGD (83 aa)). A helical membrane pass occupies residues 347–363 (NYFFYYGTTVFTAVGLE). Over 364–369 (DSFETS) the chain is Extracellular. Residues 370–387 (IVLGIVNFASTFVGIFLV) traverse the membrane as a helical segment. The Cytoplasmic portion of the chain corresponds to 388 to 394 (ERYGRRR). Residues 395-415 (CLLWGAASMTACMVVFASVGV) form a helical membrane-spanning segment. Topologically, residues 416 to 437 (TRLWPNGKKNGSSKGAGNCMIV) are extracellular. Residue N425 is glycosylated (N-linked (GlcNAc...) asparagine). The chain crosses the membrane as a helical span at residues 438 to 458 (FTCFYLFCFATTWAPIPFVVN). Residues 459 to 475 (SETFPLRVKSKCMAIAQ) are Cytoplasmic-facing. The chain crosses the membrane as a helical span at residues 476 to 496 (ACNWIWGFLIGFFTPFISGAI). A topological domain (extracellular) is located at residue D497. Residues 498–518 (FYYGYVFMGCLVFSYFYVFFF) form a helical membrane-spanning segment. Topologically, residues 519-576 (VPETKGLTLEEVNTLWEEGVLPWKSPSWVPPNKRGTDYNADDLMHDDQPFYKKMFGKK) are cytoplasmic.

Belongs to the major facilitator superfamily. Sugar transporter (TC 2.A.1.1) family.

It localises to the cell membrane. Xylose uptake is strongly inhibited by glucose. Low-affinity glucose transporter. Can also transport xylose. In Saccharomyces cerevisiae (strain ATCC 204508 / S288c) (Baker's yeast), this protein is Low-affinity glucose transporter HXT4 (HXT4).